Here is a 761-residue protein sequence, read N- to C-terminus: uncharacterized protein (761 aa).

N-acetylmethionine is present on methionine 1. 3 disordered regions span residues 1–82 (MEHQ…SSSS), 229–320 (SNII…SALA), and 590–640 (FNRA…PEQQ). Residues 13–27 (NSGSNRVTVYNGTTL) show a composition bias toward polar residues. Residues 28–45 (PTMPKSATPTSSSTTVTT) are compositionally biased toward low complexity. 4 stretches are compositionally biased toward polar residues: residues 244–259 (TPVS…SSPE), 266–276 (NTTSSSSTSDH), 590–604 (FNRA…STDD), and 627–640 (SKNS…PEQQ).

Phosphorylated by CDC28.

This is an uncharacterized protein from Saccharomyces cerevisiae (strain ATCC 204508 / S288c) (Baker's yeast).